The sequence spans 72 residues: UPF0154 protein YneF (72 aa).

A helical membrane pass occupies residues 4–24 (WVGILVGVVALLIGVALGFFI).

It belongs to the UPF0154 family.

The protein resides in the membrane. The polypeptide is UPF0154 protein YneF (yneF) (Bacillus subtilis (strain 168)).